We begin with the raw amino-acid sequence, 124 residues long: Small ribosomal subunit protein uS12 (124 aa).

Position 89 is a 3-methylthioaspartic acid (aspartate 89).

This sequence belongs to the universal ribosomal protein uS12 family. As to quaternary structure, part of the 30S ribosomal subunit. Contacts proteins S8 and S17. May interact with IF1 in the 30S initiation complex.

In terms of biological role, with S4 and S5 plays an important role in translational accuracy. Functionally, interacts with and stabilizes bases of the 16S rRNA that are involved in tRNA selection in the A site and with the mRNA backbone. Located at the interface of the 30S and 50S subunits, it traverses the body of the 30S subunit contacting proteins on the other side and probably holding the rRNA structure together. The combined cluster of proteins S8, S12 and S17 appears to hold together the shoulder and platform of the 30S subunit. The chain is Small ribosomal subunit protein uS12 from Blochmanniella floridana.